Consider the following 88-residue polypeptide: Small ribosomal subunit protein bS20 (88 aa).

Disordered stretches follow at residues 1 to 29 (MANT…SKLR) and 69 to 88 (KNTA…AMAA).

The protein belongs to the bacterial ribosomal protein bS20 family.

Its function is as follows. Binds directly to 16S ribosomal RNA. This Polynucleobacter asymbioticus (strain DSM 18221 / CIP 109841 / QLW-P1DMWA-1) (Polynucleobacter necessarius subsp. asymbioticus) protein is Small ribosomal subunit protein bS20.